The primary structure comprises 516 residues: Bifunctional pantoate ligase/cytidylate kinase (516 aa).

A pantoate--beta-alanine ligase region spans residues 1–279 (MVRKIFQTNA…CGSTRLIDHT (279 aa)). 29–36 (MGGLHPGH) provides a ligand contact to ATP. Catalysis depends on His36, which acts as the Proton donor. (R)-pantoate is bound at residue Gln64. Gln64 provides a ligand contact to beta-alanine. 153-156 (GEKD) contributes to the ATP binding site. Residue Gln159 participates in (R)-pantoate binding. 190–193 (YSSR) serves as a coordination point for ATP. Residues 280–516 (FLMHRKPIIA…PEEVWPTPNS (237 aa)) are cytidylate kinase.

It in the N-terminal section; belongs to the pantothenate synthetase family. This sequence in the C-terminal section; belongs to the cytidylate kinase family. Type 1 subfamily.

Its subcellular location is the cytoplasm. The enzyme catalyses (R)-pantoate + beta-alanine + ATP = (R)-pantothenate + AMP + diphosphate + H(+). It carries out the reaction CMP + ATP = CDP + ADP. It catalyses the reaction dCMP + ATP = dCDP + ADP. It functions in the pathway cofactor biosynthesis; (R)-pantothenate biosynthesis; (R)-pantothenate from (R)-pantoate and beta-alanine: step 1/1. Catalyzes the condensation of pantoate with beta-alanine in an ATP-dependent reaction via a pantoyl-adenylate intermediate. Functionally, catalyzes the transfer of a phosphate group from ATP to either CMP or dCMP to form CDP or dCDP and ADP, respectively. This Prochlorococcus marinus (strain NATL1A) protein is Bifunctional pantoate ligase/cytidylate kinase.